The sequence spans 203 residues: Urease accessory protein UreG (203 aa).

13–20 serves as a coordination point for GTP; the sequence is GPVGSGKT.

The protein belongs to the SIMIBI class G3E GTPase family. UreG subfamily. As to quaternary structure, homodimer. UreD, UreF and UreG form a complex that acts as a GTP-hydrolysis-dependent molecular chaperone, activating the urease apoprotein by helping to assemble the nickel containing metallocenter of UreC. The UreE protein probably delivers the nickel.

The protein resides in the cytoplasm. Facilitates the functional incorporation of the urease nickel metallocenter. This process requires GTP hydrolysis, probably effectuated by UreG. The polypeptide is Urease accessory protein UreG (Psychromonas ingrahamii (strain DSM 17664 / CCUG 51855 / 37)).